The following is a 266-amino-acid chain: Tryptophan synthase alpha chain (266 aa).

Catalysis depends on proton acceptor residues Glu-51 and Asp-62.

Belongs to the TrpA family. Tetramer of two alpha and two beta chains.

It carries out the reaction (1S,2R)-1-C-(indol-3-yl)glycerol 3-phosphate + L-serine = D-glyceraldehyde 3-phosphate + L-tryptophan + H2O. It functions in the pathway amino-acid biosynthesis; L-tryptophan biosynthesis; L-tryptophan from chorismate: step 5/5. In terms of biological role, the alpha subunit is responsible for the aldol cleavage of indoleglycerol phosphate to indole and glyceraldehyde 3-phosphate. This chain is Tryptophan synthase alpha chain, found in Thermosynechococcus vestitus (strain NIES-2133 / IAM M-273 / BP-1).